The sequence spans 158 residues: Ribosomal RNA large subunit methyltransferase H (158 aa).

S-adenosyl-L-methionine-binding positions include L74, G105, and 124-129; that span reads LGPLTL.

This sequence belongs to the RNA methyltransferase RlmH family. Homodimer.

Its subcellular location is the cytoplasm. It carries out the reaction pseudouridine(1915) in 23S rRNA + S-adenosyl-L-methionine = N(3)-methylpseudouridine(1915) in 23S rRNA + S-adenosyl-L-homocysteine + H(+). Specifically methylates the pseudouridine at position 1915 (m3Psi1915) in 23S rRNA. The protein is Ribosomal RNA large subunit methyltransferase H of Xylella fastidiosa (strain Temecula1 / ATCC 700964).